The chain runs to 245 residues: UPF0246 protein cgR_1824 (245 aa).

This sequence belongs to the UPF0246 family.

The polypeptide is UPF0246 protein cgR_1824 (Corynebacterium glutamicum (strain R)).